We begin with the raw amino-acid sequence, 465 residues long: Sodium-coupled neutral amino acid transporter 7 (465 aa).

11 helical membrane-spanning segments follow: residues 54–74 (AVFIVVNAALGAGLLNFPAAF), 82–102 (AGVTLQMCMMAFIITGLVILA), 128–148 (ICELAIAVYTFGTCIAFLIII), 177–197 (FTITLTSVLIILPLSIPKEIG), 204–224 (TLSVIGTWYVTIIVIVKYIWP), 244–264 (FNAMPTICFGFQCHVSSVPVF), 275–295 (WWGVVTISMIICLFVYTGTGV), 318–338 (VAVAIARAFIIICVVTSYPIL), 370–390 (ILQTLVWFCLTLILALFIPDI), 394–414 (ISLIGGLAACFIFVFPGLCLI), and 427–447 (SWNAMVAYGVIMVTIGAFIFG).

It belongs to the amino acid/polyamine transporter 2 family.

The protein resides in the lysosome membrane. Its subcellular location is the cell projection. The protein localises to the axon. It carries out the reaction L-asparagine(in) + Na(+)(in) = L-asparagine(out) + Na(+)(out). It catalyses the reaction L-glutamine(in) + Na(+)(in) = L-glutamine(out) + Na(+)(out). Symporter that selectively cotransports sodium ions and amino acids, such as L-glutamine and L-asparagine from the lysosome into the cytoplasm and may participates in mTORC1 activation. The transport activity requires an acidic lysosomal lumen. The chain is Sodium-coupled neutral amino acid transporter 7 from Danio rerio (Zebrafish).